Reading from the N-terminus, the 95-residue chain is Aspartyl/glutamyl-tRNA(Asn/Gln) amidotransferase subunit C (95 aa).

Belongs to the GatC family. In terms of assembly, heterotrimer of A, B and C subunits.

The catalysed reaction is L-glutamyl-tRNA(Gln) + L-glutamine + ATP + H2O = L-glutaminyl-tRNA(Gln) + L-glutamate + ADP + phosphate + H(+). The enzyme catalyses L-aspartyl-tRNA(Asn) + L-glutamine + ATP + H2O = L-asparaginyl-tRNA(Asn) + L-glutamate + ADP + phosphate + 2 H(+). In terms of biological role, allows the formation of correctly charged Asn-tRNA(Asn) or Gln-tRNA(Gln) through the transamidation of misacylated Asp-tRNA(Asn) or Glu-tRNA(Gln) in organisms which lack either or both of asparaginyl-tRNA or glutaminyl-tRNA synthetases. The reaction takes place in the presence of glutamine and ATP through an activated phospho-Asp-tRNA(Asn) or phospho-Glu-tRNA(Gln). In Rhizobium etli (strain ATCC 51251 / DSM 11541 / JCM 21823 / NBRC 15573 / CFN 42), this protein is Aspartyl/glutamyl-tRNA(Asn/Gln) amidotransferase subunit C.